Here is a 348-residue protein sequence, read N- to C-terminus: Anthranilate phosphoribosyltransferase (348 aa).

5-phospho-alpha-D-ribose 1-diphosphate is bound by residues G81, G84–D85, N91–T94, K109–G117, and S121. G81 is a binding site for anthranilate. S93 is a binding site for Mg(2+). N112 contacts anthranilate. Position 167 (R167) interacts with anthranilate. The Mg(2+) site is built by D226 and E227.

It belongs to the anthranilate phosphoribosyltransferase family. Homodimer. It depends on Mg(2+) as a cofactor.

The enzyme catalyses N-(5-phospho-beta-D-ribosyl)anthranilate + diphosphate = 5-phospho-alpha-D-ribose 1-diphosphate + anthranilate. The protein operates within amino-acid biosynthesis; L-tryptophan biosynthesis; L-tryptophan from chorismate: step 2/5. In terms of biological role, catalyzes the transfer of the phosphoribosyl group of 5-phosphorylribose-1-pyrophosphate (PRPP) to anthranilate to yield N-(5'-phosphoribosyl)-anthranilate (PRA). This Azotobacter vinelandii (strain DJ / ATCC BAA-1303) protein is Anthranilate phosphoribosyltransferase.